The primary structure comprises 245 residues: Ubiquinone/menaquinone biosynthesis C-methyltransferase UbiE (245 aa).

S-adenosyl-L-methionine-binding positions include Thr71, Asp92, and 118-119 (DA).

The protein belongs to the class I-like SAM-binding methyltransferase superfamily. MenG/UbiE family.

It catalyses the reaction a 2-demethylmenaquinol + S-adenosyl-L-methionine = a menaquinol + S-adenosyl-L-homocysteine + H(+). The enzyme catalyses a 2-methoxy-6-(all-trans-polyprenyl)benzene-1,4-diol + S-adenosyl-L-methionine = a 5-methoxy-2-methyl-3-(all-trans-polyprenyl)benzene-1,4-diol + S-adenosyl-L-homocysteine + H(+). It participates in quinol/quinone metabolism; menaquinone biosynthesis; menaquinol from 1,4-dihydroxy-2-naphthoate: step 2/2. It functions in the pathway cofactor biosynthesis; ubiquinone biosynthesis. Methyltransferase required for the conversion of demethylmenaquinol (DMKH2) to menaquinol (MKH2) and the conversion of 2-polyprenyl-6-methoxy-1,4-benzoquinol (DDMQH2) to 2-polyprenyl-3-methyl-6-methoxy-1,4-benzoquinol (DMQH2). The sequence is that of Ubiquinone/menaquinone biosynthesis C-methyltransferase UbiE from Neisseria meningitidis serogroup A / serotype 4A (strain DSM 15465 / Z2491).